Here is a 396-residue protein sequence, read N- to C-terminus: Purine ribonucleoside efflux pump NepI (396 aa).

Residues 1–21 (MSEFIAENRGADAITRPNWSA) are Cytoplasmic-facing. Residues 22-42 (VFSVAFCVACLIIVEFLPVSL) form a helical membrane-spanning segment. At 43-54 (LTPMAQDLGISE) the chain is on the periplasmic side. A helical membrane pass occupies residues 55–75 (GVAGQSVTVTAFVAMFASLFI). The Cytoplasmic portion of the chain corresponds to 76–85 (TQTIQATDRR). Residues 86-106 (YVVILFAVLLTLSCLLVSFAN) traverse the membrane as a helical segment. Residue Ser-107 is a topological domain, periplasmic. The helical transmembrane segment at 108–128 (FSLLLIGRACLGLALGGFWAM) threads the bilayer. Residues 129 to 147 (SASLTMRLVPPRTVPKALS) are Cytoplasmic-facing. Residues 148 to 168 (VIFGAVSIALVIAAPLGSFLG) traverse the membrane as a helical segment. Residues 169–175 (ELIGWRN) lie on the Periplasmic side of the membrane. Residues 176 to 196 (VFNAAAAMGVLCIFWIIKSLP) form a helical membrane-spanning segment. Topologically, residues 197 to 215 (SLPGEPSHQKQNTFRLLQR) are cytoplasmic. Residues 216-236 (PGVMAGMIAIFMSFAGQFAFF) form a helical membrane-spanning segment. The Periplasmic portion of the chain corresponds to 237-255 (TYIRPVYMNLAGFGVDGLT). A helical membrane pass occupies residues 256–276 (LVLLSFGIASFVGTSLSSFIL). The Cytoplasmic segment spans residues 277–281 (KRSVK). Residues 282–302 (LALAGAPFVLALSALVLTLWG) traverse the membrane as a helical segment. Over 303–305 (SDK) the chain is Periplasmic. Residues 306–326 (IVATGVAIIWGLTFALIPVGW) form a helical membrane-spanning segment. Over 327 to 343 (STWITRSLADQAEKAGS) the chain is Cytoplasmic. A helical transmembrane segment spans residues 344 to 364 (IQVAVIQLANTCGAAIGGYAL). Over 365 to 366 (DN) the chain is Periplasmic. The helical transmembrane segment at 367–387 (IGLTSPLMLSGTLMLLTALLV) threads the bilayer. Residues 388-396 (TAKVKMKKS) lie on the Cytoplasmic side of the membrane.

The protein belongs to the major facilitator superfamily. DHA1 family. NepI (TC 2.A.1.2.26) subfamily.

It is found in the cell inner membrane. The catalysed reaction is inosine(in) + H(+)(out) = inosine(out) + H(+)(in). It carries out the reaction guanosine(in) + H(+)(out) = guanosine(out) + H(+)(in). Functionally, involved in the efflux of purine ribonucleosides, such as inosine and guanosine. This chain is Purine ribonucleoside efflux pump NepI, found in Escherichia coli O1:K1 / APEC.